Here is a 187-residue protein sequence, read N- to C-terminus: uncharacterized protein (187 aa).

A helical membrane pass occupies residues 8 to 28 (ITFFIILLICLICILLLLVVF). Positions 99-153 (PLENRRDMEAEEENQINEKQEPENAGETGQEEDDGLQKIHTSVTRTPSVVESQKR) are disordered. Positions 137–149 (IHTSVTRTPSVVE) are enriched in polar residues.

The protein resides in the membrane. This is an uncharacterized protein from Homo sapiens (Human).